The primary structure comprises 258 residues: Imidazole glycerol phosphate synthase subunit HisF (258 aa).

Active-site residues include Asp-11 and Asp-130.

Belongs to the HisA/HisF family. Heterodimer of HisH and HisF.

Its subcellular location is the cytoplasm. The enzyme catalyses 5-[(5-phospho-1-deoxy-D-ribulos-1-ylimino)methylamino]-1-(5-phospho-beta-D-ribosyl)imidazole-4-carboxamide + L-glutamine = D-erythro-1-(imidazol-4-yl)glycerol 3-phosphate + 5-amino-1-(5-phospho-beta-D-ribosyl)imidazole-4-carboxamide + L-glutamate + H(+). Its pathway is amino-acid biosynthesis; L-histidine biosynthesis; L-histidine from 5-phospho-alpha-D-ribose 1-diphosphate: step 5/9. IGPS catalyzes the conversion of PRFAR and glutamine to IGP, AICAR and glutamate. The HisF subunit catalyzes the cyclization activity that produces IGP and AICAR from PRFAR using the ammonia provided by the HisH subunit. The polypeptide is Imidazole glycerol phosphate synthase subunit HisF (Xanthomonas campestris pv. campestris (strain B100)).